The primary structure comprises 423 residues: MKVDVLLGLQWGDEGKGKVVDVLTPRYDVVARFQGGPNAGHTLEFEGQKYVLRSIPSGIFQGNKVNIIGNGVVLDPALFKAEAEALEASGHPLKERLHISKKAHLILPTHRILDAAYEAAKGDAKVGTTGKGIGPTYTDKVSRNGVRVGDILHNFEEVYGKAKARHEQILKSLNYEYDITELEKQWLEGIEYLKQFHLVDSEHEINNLLKSGKSVLCEGAQGTMLDVDFGSYPFVTSSNTICAGACTGLGIGPNKIGNVYGIMKAYCTRVGAGPFPTELFDETGKKIRDLGHEYGAVTGRERRCGWIDLVALKYSIMVNGVTQLIMMKSDVLDDFETIKACVAYKVNGEEIDYFPYDISEGLEPVYAELPGWKTDMTKMTSEDEFPEEFNAYVTFLEEQLETPIKIVSVGPDRGQTIERYTEE.

GTP-binding positions include 12-18 (GDEGKGK) and 40-42 (GHT). D13 acts as the Proton acceptor in catalysis. Positions 13 and 40 each coordinate Mg(2+). IMP-binding positions include 13-16 (DEGK), 38-41 (NAGH), T129, R143, Q221, T236, and R300. H41 serves as the catalytic Proton donor. 296–302 (AVTGRER) serves as a coordination point for substrate. GTP-binding positions include R302, 328–330 (KSD), and 408–410 (SVG).

Belongs to the adenylosuccinate synthetase family. In terms of assembly, homodimer. Mg(2+) serves as cofactor.

The protein localises to the cytoplasm. It catalyses the reaction IMP + L-aspartate + GTP = N(6)-(1,2-dicarboxyethyl)-AMP + GDP + phosphate + 2 H(+). The protein operates within purine metabolism; AMP biosynthesis via de novo pathway; AMP from IMP: step 1/2. Plays an important role in the de novo pathway of purine nucleotide biosynthesis. Catalyzes the first committed step in the biosynthesis of AMP from IMP. In Phocaeicola vulgatus (strain ATCC 8482 / DSM 1447 / JCM 5826 / CCUG 4940 / NBRC 14291 / NCTC 11154) (Bacteroides vulgatus), this protein is Adenylosuccinate synthetase.